The sequence spans 323 residues: CD-NTase-associated protein 12 (323 aa).

Positions R4 to T120 constitute a TIR domain. The active site involves E84. The STING domain stretch occupies residues S154–L323. Positions 164, 165, 234, 237, 259, 262, and 263 each coordinate 3',3'-c-di-GMP.

The protein in the C-terminal section; belongs to the bacterial STING family. Forms homodimers which subsequently form filaments. In vitro in the presence of c-di-GMP forms filaments up to 300 nm in length with an ordered array of parallel-stacked subunits, where the TIR domains form one face of the filament and the STING domains form the other face. Antiparallel double-filament structures are also seen. 3'3'-cGAMP weakly induces filament formation, while 2'3'-cGAMP does not.

The enzyme catalyses NAD(+) + H2O = ADP-D-ribose + nicotinamide + H(+). With respect to regulation, NAD(+) hydrolase activity is strongly stimulated by c-di-GMP, weakly by 3'3'-cGAMP, very weakly by c-di-AMP and not at all by 2'3'-cGAMP. Self-association of TIR domains is required for NADase activity. Effector protein of a CBASS antiviral system with NAD(+) hydrolase activity. CBASS (cyclic oligonucleotide-based antiphage signaling system) provides immunity against bacteriophage. The CD-NTase protein synthesizes cyclic nucleotides in response to infection; these serve as specific second messenger signals. The signals activate a diverse range of effectors, leading to bacterial cell death and thus abortive phage infection. A type I-D(GG) CBASS system. In terms of biological role, upon activation by 3'3'-c-di-GMP forms filaments which hydrolyze NAD(+); filament formation is required for enzyme activation. Induction in an E.coli strain that synthesizes c-di-GMP leads to significant growth inhibition. Binds c-di-GMP and 3'3'-cGAMP (3'3'-cyclic GMP-AMP), but not c-di-AMP, 2'3'-cGAMP or cUMP-AMP. The chain is CD-NTase-associated protein 12 from Sphingobacterium faecium (strain DSM 11690 / JCM 21820 / NBRC 15299 / NCIMB 13408 / KS 0470).